The primary structure comprises 605 residues: DNA mismatch repair protein MutL (605 aa).

Belongs to the DNA mismatch repair MutL/HexB family.

Functionally, this protein is involved in the repair of mismatches in DNA. It is required for dam-dependent methyl-directed DNA mismatch repair. May act as a 'molecular matchmaker', a protein that promotes the formation of a stable complex between two or more DNA-binding proteins in an ATP-dependent manner without itself being part of a final effector complex. In Pelotomaculum thermopropionicum (strain DSM 13744 / JCM 10971 / SI), this protein is DNA mismatch repair protein MutL.